We begin with the raw amino-acid sequence, 117 residues long: DNA-binding protein MK1619 (117 aa).

This sequence belongs to the PDCD5 family.

The protein is DNA-binding protein MK1619 of Methanopyrus kandleri (strain AV19 / DSM 6324 / JCM 9639 / NBRC 100938).